A 402-amino-acid polypeptide reads, in one-letter code: uncharacterized protein (402 aa).

12 consecutive transmembrane segments (helical) span residues 23–43, 52–72, 90–110, 121–141, 158–178, 180–200, 228–248, 255–275, 282–302, 309–329, 351–371, and 375–395; these read IVSVVMFTFIGYLTIGIPLAV, LGYGSVLAGLVISLQYLATLL, VLYGMAGSAASGLFMLLSVAI, LLVGRLVLGAAESLVGSAAIG, WNGIASYGAIALGAPLGVLLV, WLGLWSMGASIVLLGALGFAL, GMGLALGAIGFGTIATFITLY, ANAVLCLSAFGGCFIGARLLF, LGGFRVAIICLGVESLGLLLL, WVGLAGAALTGFGFSLVFPAF, LFVDLSLGITGPLVGFVANLF, and SMFLFACLASLGGLALAVALH.

It belongs to the major facilitator superfamily. YhhS family.

The protein resides in the cell inner membrane. This is an uncharacterized protein from Pseudomonas aeruginosa (strain ATCC 15692 / DSM 22644 / CIP 104116 / JCM 14847 / LMG 12228 / 1C / PRS 101 / PAO1).